A 459-amino-acid chain; its full sequence is Probable 3-ketoacyl-CoA synthase 14 (459 aa).

A signal peptide spans 1 to 25; that stretch reads MFIAMADFKLLLLILILLSLFELDL. The helical transmembrane segment at 32–52 threads the bilayer; the sequence is FFSPFPVKIGLLLISIFFYAY. The FAE domain occupies 52-334; that stretch reads YSTTRSKPVY…FILFLVKSKL (283 aa). Residues histidine 268, histidine 352, histidine 356, histidine 385, and asparagine 389 contribute to the active site.

It belongs to the thiolase-like superfamily. Chalcone/stilbene synthases family. Expressed in siliques.

The protein resides in the membrane. The catalysed reaction is a very-long-chain acyl-CoA + malonyl-CoA + H(+) = a very-long-chain 3-oxoacyl-CoA + CO2 + CoA. Its pathway is lipid metabolism; fatty acid biosynthesis. This chain is Probable 3-ketoacyl-CoA synthase 14, found in Arabidopsis thaliana (Mouse-ear cress).